A 354-amino-acid polypeptide reads, in one-letter code: Selenide, water dikinase (354 aa).

U21 is a catalytic residue. A non-standard amino acid (selenocysteine) is located at residue U21. Residues K24 and 51-53 (TSD) each bind ATP. D54 serves as a coordination point for Mg(2+). ATP is bound by residues D71, D94, and 141-143 (GHT). Position 94 (D94) interacts with Mg(2+). Residue D229 participates in Mg(2+) binding.

It belongs to the selenophosphate synthase 1 family. Class I subfamily. As to quaternary structure, homodimer. Requires Mg(2+) as cofactor.

It catalyses the reaction hydrogenselenide + ATP + H2O = selenophosphate + AMP + phosphate + 2 H(+). Functionally, synthesizes selenophosphate from selenide and ATP. This chain is Selenide, water dikinase, found in Treponema denticola (strain ATCC 35405 / DSM 14222 / CIP 103919 / JCM 8153 / KCTC 15104).